The primary structure comprises 365 residues: 3-dehydroquinate synthase (365 aa).

NAD(+)-binding positions include 69-74 (DGEAHK), 103-107 (GVIGD), 127-128 (TT), K140, and K149. 3 residues coordinate Zn(2+): E182, H245, and H262.

Belongs to the sugar phosphate cyclases superfamily. Dehydroquinate synthase family. It depends on Co(2+) as a cofactor. Zn(2+) serves as cofactor. NAD(+) is required as a cofactor.

The protein localises to the cytoplasm. The enzyme catalyses 7-phospho-2-dehydro-3-deoxy-D-arabino-heptonate = 3-dehydroquinate + phosphate. Its pathway is metabolic intermediate biosynthesis; chorismate biosynthesis; chorismate from D-erythrose 4-phosphate and phosphoenolpyruvate: step 2/7. In terms of biological role, catalyzes the conversion of 3-deoxy-D-arabino-heptulosonate 7-phosphate (DAHP) to dehydroquinate (DHQ). The chain is 3-dehydroquinate synthase from Pseudomonas putida (strain ATCC 700007 / DSM 6899 / JCM 31910 / BCRC 17059 / LMG 24140 / F1).